The primary structure comprises 436 residues: GDP-mannose 6-dehydrogenase (436 aa).

Positions 10, 11, 30, 35, 86, and 124 each coordinate NAD(+). Positions 161, 210, 214, 217, 225, 256, 257, 259, and 265 each coordinate GDP-alpha-D-mannuronate. Cys268 is an active-site residue. Position 271 (Lys271) interacts with NAD(+). Lys324 contacts GDP-alpha-D-mannuronate. Arg331 lines the NAD(+) pocket.

The protein belongs to the UDP-glucose/GDP-mannose dehydrogenase family.

The catalysed reaction is GDP-alpha-D-mannose + 2 NAD(+) + H2O = GDP-alpha-D-mannuronate + 2 NADH + 3 H(+). It functions in the pathway glycan biosynthesis; alginate biosynthesis. Functionally, catalyzes the oxidation of guanosine diphospho-D-mannose (GDP-D-mannose) to GDP-D-mannuronic acid, a precursor for alginate polymerization. The alginate layer causes a mucoid phenotype and is essential for cyst formation. The sequence is that of GDP-mannose 6-dehydrogenase (algD) from Azotobacter vinelandii.